The chain runs to 440 residues: Xaa-Pro dipeptidase (440 aa).

Asp-244, Asp-255, His-335, Glu-380, and Glu-419 together coordinate Mn(2+).

The protein belongs to the peptidase M24B family. Bacterial-type prolidase subfamily. Requires Mn(2+) as cofactor.

It carries out the reaction Xaa-L-Pro dipeptide + H2O = an L-alpha-amino acid + L-proline. Its function is as follows. Splits dipeptides with a prolyl residue in the C-terminal position. The sequence is that of Xaa-Pro dipeptidase from Shewanella pealeana (strain ATCC 700345 / ANG-SQ1).